Reading from the N-terminus, the 92-residue chain is RNA-binding protein Hfq (92 aa).

Residues 9–68 form the Sm domain; sequence DPFLNALRRERVPVSIYLVNGIKLQGQVESFDQFVILLKNTVSQMVYKHAISTVVPSRPF. A compositionally biased stretch (polar residues) spans 73–82; sequence HQATNAQAGY. A disordered region spans residues 73-92; it reads HQATNAQAGYNAQHDDGDEK.

This sequence belongs to the Hfq family. In terms of assembly, homohexamer.

In terms of biological role, RNA chaperone that binds small regulatory RNA (sRNAs) and mRNAs to facilitate mRNA translational regulation in response to envelope stress, environmental stress and changes in metabolite concentrations. Also binds with high specificity to tRNAs. The sequence is that of RNA-binding protein Hfq from Shewanella pealeana (strain ATCC 700345 / ANG-SQ1).